Reading from the N-terminus, the 1004-residue chain is Ephrin type-A receptor 8 (1004 aa).

The N-terminal stretch at 1 to 26 (MAPARARLSPALWVVTAAAAATCVSA) is a signal peptide. Residues 27–541 (GRGEVNLLDT…KPRPRYDTRT (515 aa)) are Extracellular-facing. In terms of domain architecture, Eph LBD spans 30 to 208 (EVNLLDTSTI…YYKKCPAMVR (179 aa)). Fibronectin type-III domains lie at 327–437 (PPSA…TNQA) and 438–533 (APSQ…TGKP). N-linked (GlcNAc...) asparagine glycosylation is found at asparagine 339, asparagine 406, and asparagine 431. The helical transmembrane segment at 542–562 (IVWICLTLITGLVVLLLLLIC) threads the bilayer. The segment at 563–569 (KKRHCGY) is mediates interaction with ANKS1A and ANKS1B. At 563-1004 (KKRHCGYSKA…SSTQGPRRHL (442 aa)) the chain is on the cytoplasmic side. The mediates interaction with PIK3CG and required for endocytosis stretch occupies residues 588 to 643 (APPPVFLPLNHPPGKFPETQFSAEPHTYEEPGRAGRSFTREIEASRIHIEKIIGSG). Tyrosine 615 carries the phosphotyrosine; by autocatalysis modification. The Protein kinase domain maps to 634–895 (IHIEKIIGSG…HVVSVLDALV (262 aa)). Residues 640–648 (IGSGESGEV) and lysine 666 each bind ATP. Catalysis depends on aspartate 759, which acts as the Proton acceptor. A Phosphotyrosine; by autocatalysis modification is found at tyrosine 838. One can recognise an SAM domain in the interval 929–993 (NGDLTVGDWL…LGSIQTMRAQ (65 aa)). The PDZ-binding signature appears at 1002-1004 (RHL).

This sequence belongs to the protein kinase superfamily. Tyr protein kinase family. Ephrin receptor subfamily. In terms of assembly, heterotetramer upon binding of the ligand. The heterotetramer is composed of an ephrin dimer and a receptor dimer. Oligomerization is probably required to induce biological responses. May also form heterodimers with other ephrin receptors. Interacts with FYN; possible downstream effector of EPHA8 in regulation of cell adhesion. Interacts with PIK3CG; regulates integrin-mediated cell adhesion to substrate. Interacts with TIAM1; regulates clathrin-mediated endocytosis of EPHA8. Interacts with ANKS1A and ANKS1B; EPHA8 kinase activity-independent but stimulated by EPHA8 ubiquitination. In terms of processing, phosphorylated. Phosphorylation is stimulated upon binding of its ligands including EFNA2, EFNA3 and EFNA5. Autophosphorylation on Tyr-615 is critical for association with FYN. Autophosphorylation on Tyr-838 modulates tyrosine kinase activity. Ubiquitinated. Ubiquitination by CBL regulates the receptor stability and activity through proteasomal degradation. ANKS1A prevents ubiquitination and degradation. In terms of tissue distribution, specifically expressed in the central nervous system.

Its subcellular location is the cell membrane. The protein resides in the cell projection. The protein localises to the early endosome membrane. The enzyme catalyses L-tyrosyl-[protein] + ATP = O-phospho-L-tyrosyl-[protein] + ADP + H(+). Receptor tyrosine kinase which binds promiscuously GPI-anchored ephrin-A family ligands residing on adjacent cells, leading to contact-dependent bidirectional signaling into neighboring cells. The signaling pathway downstream of the receptor is referred to as forward signaling while the signaling pathway downstream of the ephrin ligand is referred to as reverse signaling. The GPI-anchored ephrin-A EFNA2, EFNA3, and EFNA5 are able to activate EPHA8 through phosphorylation. With EFNA5 may regulate integrin-mediated cell adhesion and migration on fibronectin substrate but also neurite outgrowth. During development of the nervous system also plays a role in axon guidance. Downstream effectors of the EPHA8 signaling pathway include FYN which promotes cell adhesion upon activation by EPHA8 and the MAP kinases in the stimulation of neurite outgrowth. In Mus musculus (Mouse), this protein is Ephrin type-A receptor 8 (Epha8).